We begin with the raw amino-acid sequence, 387 residues long: Na(+)/H(+)-K(+) antiporter GerN (387 aa).

11 helical membrane-spanning segments follow: residues 29–49 (PSVLGKLIVGIVIGPAVLGWI), 54–74 (LLTQLSNVGVILLMFMAGLET), 87–107 (LAVALGGIILPFVGGYVSGLV), 114–134 (NAVFLGLLLCATSVSISVQTL), 149–169 (LGAAVFDDILVVILLAFAMSF), 175–195 (VNLTMVILKKVVFFASIILIG), 219–239 (ALIICFSFAYFGELLGIAGII), 263–283 (PIAYAMFVPVFFVSIGMNITF), 290–310 (IWFILALTVIAVLTKLIGCGF), 324–344 (IIGAGMVSRGEVALIIAGTGL), and 347–367 (GLLAQDYFTAIVIVVILTTMI).

It belongs to the monovalent cation:proton antiporter 2 (CPA2) transporter (TC 2.A.37) family.

The protein resides in the membrane. Na(+)/H(+) antiporter that extrudes sodium in exchange for external protons. Can also use potassium as a coupling ion, without completely replacing H(+). This Na(+)/H(+)-K(+) antiport is much more rapid than Na(+)/H(+) antiport. Can also extrude lithium. Important for the inosine-dependent germination of spores. This Bacillus cereus protein is Na(+)/H(+)-K(+) antiporter GerN (gerN).